The chain runs to 820 residues: Phospholipase D alpha 3 (820 aa).

The C2 domain maps to 1 to 133; the sequence is MTEQLLLHGT…ITGQPIDRWL (133 aa). Asp194 lines the Ca(2+) pocket. The 38-residue stretch at 334 to 371 folds into the PLD phosphodiesterase 1 domain; it reads TMFTHHQKTIVVDSEVDGSLTKRRIVSFLGGIDLCDGR. Catalysis depends on residues His339, Lys341, and Asp346. Residue His339 participates in a 1,2-diacyl-sn-glycero-3-phosphate binding. The Ca(2+) site is built by His377 and His411. A 1,2-diacyl-sn-glycero-3-phosphate is bound by residues Gln528 and His667. The PLD phosphodiesterase 2 domain maps to 662 to 689; the sequence is FMIYVHSKMMIVDDEYIIIGSANINQRS. Active-site residues include His667, Lys669, and Asp674. Glu730 is a binding site for Ca(2+).

It belongs to the phospholipase D family. C2-PLD subfamily. It depends on Ca(2+) as a cofactor. Expressed in buds, flowers, siliques, stems, old leaves and roots. Expressed in the sieve elements.

Its subcellular location is the cytoplasm. It localises to the membrane. It catalyses the reaction a 1,2-diacyl-sn-glycero-3-phosphocholine + H2O = a 1,2-diacyl-sn-glycero-3-phosphate + choline + H(+). Functionally, hydrolyzes glycerol-phospholipids at the terminal phosphodiesteric bond to generate phosphatidic acids (PA). Active with phosphatidylcholine (PC), phosphatidylethanolamine (PE), phosphatidylglycerol (PG), and phosphatidylserine (PS) as substrates. No activity toward phosphatidylinositol (PI) or PIP2. Positively mediates plant responses to hyperosmotic stresses and promotes root growth, flowering, and stress avoidance. Not involved in the abscisic acid regulation of stomatal movement and transpirational water loss. In Arabidopsis thaliana (Mouse-ear cress), this protein is Phospholipase D alpha 3.